The following is a 472-amino-acid chain: MSTTSKESLVCNLRQLKCHFTWNLIAEDESLDEFEDRVFNKDEFQNSEFKATMCNILAYVKHCRGLNEAALQCLGEAEGFIQQQHPDQVEIRSLVTWGNYAWVYYHMGQFSKAQAYLDKVKQVCKKFSSPYRIENPALDCEEGWARLKCTKNQNERVKVCFQKALEKDPKNPEFTSGWAIAFYRLDDWPARNYCIDSLEQAIQLSPDNTYVKVLLALKLDAVHVHKNQAMALVEEALKKDPSAIDTLLRAARFYCKVYDTDRAIQLLRKALEKLPNNAYVHYYMGCCYRSKVHHMLNRREMVFSGDRKKLEELIQLAVNHLRKAEEIKEMLEYSCSFLADLYIIAKKYDEADYYFQKELSKDLPPGPKQLLHLRYGNFQFFQMKRQDKAIYHYMEGVKIKKKTIPQKKMREKLQRIALRRLHEDESDSEALHILAFLQENGGGQQADKDSERGVDSANQVPSASLDEDGAEY.

At Ser-2 the chain carries N-acetylserine. TPR repeat units follow at residues Ala-51–Val-89, Glu-90–Asn-135, Pro-136–Asn-171, Pro-172–Asn-208, Ile-244–Asn-277, Ala-278–Tyr-333, Ser-334–Pro-364, Pro-365–Thr-403, and Ile-404–Gln-445. Positions Gly-441 to Tyr-472 are disordered.

It belongs to the IFIT family. As to quaternary structure, domain-swapped homodimer. Component of an interferon-dependent multiprotein complex, at least composed of IFIT1, IFIT2 and IFIT3. Interacts with IFIT1 and IFIT3. Interacts with STING1/MITA and disrupts its interaction with MAVS or TBK1. Interacts with EIF3C.

The protein resides in the cytoplasm. It is found in the endoplasmic reticulum. Its function is as follows. IFN-induced antiviral protein which inhibits expression of viral messenger RNAs lacking 2'-O-methylation of the 5' cap. The ribose 2'-O-methylation would provide a molecular signature to distinguish between self and non-self mRNAs by the host during viral infection. Viruses evolved several ways to evade this restriction system such as encoding their own 2'-O-methylase for their mRNAs or by stealing host cap containing the 2'-O-methylation (cap snatching mechanism). Binds AU-rich viral RNAs, with or without 5' triphosphorylation, RNA-binding is required for antiviral activity. Can promote apoptosis. This Mus musculus (Mouse) protein is Interferon-induced protein with tetratricopeptide repeats 2 (Ifit2).